The sequence spans 257 residues: Imidazole glycerol phosphate synthase subunit HisF (257 aa).

Residues aspartate 12 and aspartate 131 contribute to the active site.

This sequence belongs to the HisA/HisF family. Heterodimer of HisH and HisF.

It is found in the cytoplasm. It catalyses the reaction 5-[(5-phospho-1-deoxy-D-ribulos-1-ylimino)methylamino]-1-(5-phospho-beta-D-ribosyl)imidazole-4-carboxamide + L-glutamine = D-erythro-1-(imidazol-4-yl)glycerol 3-phosphate + 5-amino-1-(5-phospho-beta-D-ribosyl)imidazole-4-carboxamide + L-glutamate + H(+). It functions in the pathway amino-acid biosynthesis; L-histidine biosynthesis; L-histidine from 5-phospho-alpha-D-ribose 1-diphosphate: step 5/9. Its function is as follows. IGPS catalyzes the conversion of PRFAR and glutamine to IGP, AICAR and glutamate. The HisF subunit catalyzes the cyclization activity that produces IGP and AICAR from PRFAR using the ammonia provided by the HisH subunit. This chain is Imidazole glycerol phosphate synthase subunit HisF, found in Paraburkholderia xenovorans (strain LB400).